The sequence spans 929 residues: MDSVTTEHKQEVDDRFDTARITAAVDALAEKHQGREDAFRTAMAQLLKAELIAARAAAQAILLKDRHGRRCAERLCHVQDEIIRILYSAATRHLYRSPIPSGAERMAVVATGGYGRGLMAPESDIDLLFILPYKQTAWGEQVAEAILYCLWDMGLKVGHATRSVDESIRQARGDMTIRTAILETRFLTGDQPLYDELVERFDKEVVQGTASEFVTAKLAEREERHRRGGQSRYLVEPNVKDGKGALRDLHTLFWIAKYVYRVRDTDELVERGVFDAQEYRTFRRCADFLWSVRCNLHFYSGRAEERLSFDLQREIAVRLGYTSHPGMQDVERFMKHYFLVAKEVGNLTAILCAKLEDQQAKPAPVLSRMMARLRPTPAKRRVPDSDDFIVDNNRINVAAPDVFKHDPVNLIRIFRLAQKHNLAFHPDAMRDVTRSLGLINAQLRENPEANRLFMEILTSDNAEIVLRRMNETGVLGHFIRAFGKIVSMMQFNMYHHYTVDEHLIRCVGFLQDIERGGIEEFAVASDLMRKIRPEHRSVIYIATLLHDVAKGRPEDHSIAGAKVARRLCPRLGFSPADTELVAWLIEEHLTMSTVAQSRDLSDRKTIENFAAVVQSVEQMKLLTILTTADIRGVGPGVWNGWKAQLLRSLYYETEPVLTGGFSEVDRGKRLTAAYAEFRNAFAEWPADELDAYIARHYPAYWLKVELPRKIRHARFVRSSEQAGHKLAINVGFDEVRGVTELTIFAADHPWLLSIIAGACASAGANIVDAQIYTTTDGRALDTISISREYDRDEDEGRRATRIGEMIEDVLEGKLRLPEVVARRTVRSKARPFVIEPEVTINNQWSDRYTVIEVSGLDRPGLLYELTTAISKLNLNIASAHVATFGERARDVFYVTDLLGAQINAPTRQSAIKSALTHVMAGDKAVQPAA.

Residues 1–383 (MDSVTTEHKQ…RPTPAKRRVP (383 aa)) form a uridylyltransferase region. The interval 384–739 (DSDDFIVDNN…VGFDEVRGVT (356 aa)) is uridylyl-removing. The HD domain maps to 499-622 (VDEHLIRCVG…VQSVEQMKLL (124 aa)). 2 consecutive ACT domains span residues 740–822 (ELTI…VVAR) and 850–927 (VIEV…AVQP).

This sequence belongs to the GlnD family. It depends on Mg(2+) as a cofactor.

The catalysed reaction is [protein-PII]-L-tyrosine + UTP = [protein-PII]-uridylyl-L-tyrosine + diphosphate. The enzyme catalyses [protein-PII]-uridylyl-L-tyrosine + H2O = [protein-PII]-L-tyrosine + UMP + H(+). Uridylyltransferase (UTase) activity is inhibited by glutamine, while glutamine activates uridylyl-removing (UR) activity. In terms of biological role, modifies, by uridylylation and deuridylylation, the PII regulatory proteins (GlnB and homologs), in response to the nitrogen status of the cell that GlnD senses through the glutamine level. Under low glutamine levels, catalyzes the conversion of the PII proteins and UTP to PII-UMP and PPi, while under higher glutamine levels, GlnD hydrolyzes PII-UMP to PII and UMP (deuridylylation). Thus, controls uridylylation state and activity of the PII proteins, and plays an important role in the regulation of nitrogen fixation and metabolism. The sequence is that of Bifunctional uridylyltransferase/uridylyl-removing enzyme from Bradyrhizobium diazoefficiens (strain JCM 10833 / BCRC 13528 / IAM 13628 / NBRC 14792 / USDA 110).